The chain runs to 155 residues: Large ribosomal subunit protein eL24 (155 aa).

A compositionally biased stretch (basic and acidic residues) spans 93-123 (KRNARPETRNATRAKHAEAAKERKEKEAERR). Residues 93–155 (KRNARPETRN…SAPKVQATSR (63 aa)) form a disordered region.

It belongs to the eukaryotic ribosomal protein eL24 family.

This Yarrowia lipolytica (strain CLIB 122 / E 150) (Yeast) protein is Large ribosomal subunit protein eL24 (RPL24).